A 578-amino-acid chain; its full sequence is Octopamine receptor 2 (578 aa).

Over 1–84 (MMSFPIALFA…YDSITIFITV (84 aa)) the chain is Extracellular. Asparagine 13, asparagine 38, asparagine 46, and asparagine 59 each carry an N-linked (GlcNAc...) asparagine glycan. Residues 85–107 (AVVLTLITLWTILGNFFVLMALY) traverse the membrane as a helical segment. Residues 108 to 117 (RYGTLRTMSN) are Cytoplasmic-facing. Residues 118-139 (CLIGNLAISDLLLAVTVLPIST) traverse the membrane as a helical segment. Residues 140–156 (VHDLLGYWVFGEFTCTL) lie on the Extracellular side of the membrane. The cysteines at positions 154 and 239 are disulfide-linked. Residues 157–177 (WLCMDVLYCTASIWGLCTVAF) form a helical membrane-spanning segment. Residues 178 to 197 (DRYLATVYPVWYHDQRSVRK) are Cytoplasmic-facing. A helical transmembrane segment spans residues 198 to 220 (AVGCIVFVWIFSIVISFAPFIGW). The Extracellular portion of the chain corresponds to 221 to 251 (QHMIPSFFSFNASIQRYQCILFTSSSYVLYS). An N-linked (GlcNAc...) asparagine glycan is attached at asparagine 231. Residues 252-272 (SMGSFVIPAILMAFMYVRIFV) form a helical membrane-spanning segment. Residues 273 to 495 (VLHNQSRGVK…ELREQRATKR (223 aa)) lie on the Cytoplasmic side of the membrane. Residues 496-517 (MLLIMACFCVCWMPFLFMYILR) traverse the membrane as a helical segment. The Extracellular portion of the chain corresponds to 518–531 (SVCDTCHMNQHFVA). The chain crosses the membrane as a helical span at residues 532–553 (AIIWLGYVNSSLNPVLYTLFND). Topologically, residues 554–578 (DFKVAFKRLIGARSPSAYRSPGPRR) are cytoplasmic.

It belongs to the G-protein coupled receptor 1 family.

It localises to the cell membrane. In terms of biological role, receptor for octopamine. Octopamine (OA) is a neurotransmitter, neurohormone, and neuromodulator in invertebrates. This receptor induces a long lasting opening of voltage- independent chloride channels, a process which seems to involve protein phosphorylation but does not require either cAPK or PKC. The rank order of potency for agonists is p-synephrine &gt; p-octopamine &gt; xylometazoline &gt; B-HT920 &gt; norepinephrine = clonidine &gt; epinephrine &gt; p-tyramine &gt; phenylephrine = oxymetazoline = mehoxamine = dopamine &gt; serotonin &gt; histamine. For antagonists, the rank order is rauwolscine = mianserin &gt; phentolamine &gt; chlorpromazine &gt; spiperone &gt; yohimbine &gt; propanolol &gt; alprenolol &gt; prazosine &gt; pindolol. This Lymnaea stagnalis (Great pond snail) protein is Octopamine receptor 2.